Reading from the N-terminus, the 210-residue chain is Glutathione S-transferase P (210 aa).

The 80-residue stretch at 2-81 (PPYTIVYFPV…HLGRTLGLYG (80 aa)) folds into the GST N-terminal domain. Phosphotyrosine; by EGFR is present on tyrosine 4. Glutathione contacts are provided by residues tyrosine 8, arginine 14, tryptophan 39, lysine 45, and 52 to 53 (QL). Phosphothreonine is present on threonine 62. 65–66 (QS) lines the glutathione pocket. The 122-residue stretch at 83 to 204 (DQQEAALVDM…ASPEHMNRPI (122 aa)) folds into the GST C-terminal domain. Lysine 103 and lysine 116 each carry N6-succinyllysine. Residue lysine 128 is modified to N6-acetyllysine.

Belongs to the GST superfamily. Pi family. As to quaternary structure, homodimer. Interacts with CDK5.

It localises to the cytoplasm. The protein localises to the mitochondrion. Its subcellular location is the nucleus. The catalysed reaction is RX + glutathione = an S-substituted glutathione + a halide anion + H(+). The enzyme catalyses prostaglandin J2 + glutathione = prostaglandin J2-S-(R)-glutathione. It carries out the reaction prostaglandin J2 + glutathione = prostaglandin J2-S-(S)-glutathione. It catalyses the reaction prostaglandin A2 + glutathione = prostaglandin A2-S-(S)-glutathione. The catalysed reaction is 11(S)-hydroxy-14(S),15(S)-epoxy-(5Z,8Z,12E)-eicosatrienoate + glutathione = (11S,15S)-dihydroxy-14(R)-S-glutathionyl-(5Z,8Z,12E)-eicosatrienoate. Conjugation of reduced glutathione to a wide number of exogenous and endogenous hydrophobic electrophiles. Involved in the formation of glutathione conjugates of both prostaglandin A2 (PGA2) and prostaglandin J2 (PGJ2). Participates in the formation of novel hepoxilin regioisomers. Negatively regulates CDK5 activity via p25/p35 translocation to prevent neurodegeneration. This chain is Glutathione S-transferase P (GSTP1), found in Bos taurus (Bovine).